Here is a 464-residue protein sequence, read N- to C-terminus: RYamide receptor (464 aa).

Over methionine 1 to lysine 105 the chain is Extracellular. N-linked (GlcNAc...) asparagine glycans are attached at residues asparagine 49, asparagine 79, and asparagine 85. Residues isoleucine 106 to valine 126 traverse the membrane as a helical segment. The Cytoplasmic portion of the chain corresponds to cysteine 127–alanine 148. Residues isoleucine 149–leucine 169 form a helical membrane-spanning segment. Topologically, residues asparagine 170–serine 189 are extracellular. A glycan (N-linked (GlcNAc...) asparagine) is linked at asparagine 183. The chain crosses the membrane as a helical span at residues valine 190–tryptophan 210. The Cytoplasmic portion of the chain corresponds to proline 211 to alanine 221. Residues threonine 222–valine 242 form a helical membrane-spanning segment. Residues serine 243 to tyrosine 274 lie on the Extracellular side of the membrane. A helical transmembrane segment spans residues threonine 275–alanine 295. The Cytoplasmic portion of the chain corresponds to arginine 296–methionine 329. The chain crosses the membrane as a helical span at residues leucine 330 to leucine 350. Topologically, residues asparagine 351–tyrosine 363 are extracellular. Residues valine 364–cysteine 384 traverse the membrane as a helical segment. The Cytoplasmic segment spans residues tyrosine 385–arginine 464.

It belongs to the G-protein coupled receptor 1 family.

The protein resides in the cell membrane. Its function is as follows. Receptor for the neuropeptides RYamide-1 and RYamide-2. The activity of this receptor is mediated by G proteins which activate a phosphatidyl-inositol-calcium second messenger system. RYamide signaling may suppress feeding behavior. The polypeptide is RYamide receptor (Drosophila melanogaster (Fruit fly)).